The sequence spans 394 residues: Galactose-3-O-sulfotransferase 2 (394 aa).

Topologically, residues 1-8 are cytoplasmic; it reads MWGSQHRS. A helical; Signal-anchor for type II membrane protein transmembrane segment spans residues 9 to 29; the sequence is FQVALWFLVLAVFLLVGFLHV. Residues 30 to 394 lie on the Lumenal side of the membrane; sequence DFRLLIPDKV…TPKDIPFLKK (365 aa). Residues Asn72, Asn176, Asn284, and Asn326 are each glycosylated (N-linked (GlcNAc...) asparagine).

It belongs to the galactose-3-O-sulfotransferase family.

The protein resides in the golgi apparatus. Its subcellular location is the golgi stack membrane. It functions in the pathway protein modification; carbohydrate sulfation. Strongly inhibited by Cu(2+) and Zn(2+). Transfers a sulfate group to the hydroxyl group at C3 of non-reducing beta-galactosyl residues. Acts both on type 1 (Gal-beta-1,3-GlcNAc) and type 2 (Gal-beta-1,4-GlcNAc) chains with similar efficiency. This Mus musculus (Mouse) protein is Galactose-3-O-sulfotransferase 2 (Gal3st2).